A 586-amino-acid polypeptide reads, in one-letter code: Phosphomethylpyrimidine synthase (586 aa).

The interval 1 to 33 (MKQSVSAEQIELKSSLPGSKKVYVDGPREGMKV) is disordered. Over residues 22–33 (VYVDGPREGMKV) the composition is skewed to basic and acidic residues. Substrate is bound by residues Asn193, Met222, Tyr251, His287, 307 to 309 (SRG), 348 to 351 (DGLR), and Glu387. His391 is a Zn(2+) binding site. Tyr414 provides a ligand contact to substrate. His455 contacts Zn(2+). The [4Fe-4S] cluster site is built by Cys535, Cys538, and Cys543.

This sequence belongs to the ThiC family. Requires [4Fe-4S] cluster as cofactor.

The enzyme catalyses 5-amino-1-(5-phospho-beta-D-ribosyl)imidazole + S-adenosyl-L-methionine = 4-amino-2-methyl-5-(phosphooxymethyl)pyrimidine + CO + 5'-deoxyadenosine + formate + L-methionine + 3 H(+). It participates in cofactor biosynthesis; thiamine diphosphate biosynthesis. Its function is as follows. Catalyzes the synthesis of the hydroxymethylpyrimidine phosphate (HMP-P) moiety of thiamine from aminoimidazole ribotide (AIR) in a radical S-adenosyl-L-methionine (SAM)-dependent reaction. The sequence is that of Phosphomethylpyrimidine synthase from Bacillus cereus (strain B4264).